Consider the following 136-residue polypeptide: T-cell receptor alpha chain constant (136 aa).

The Ig-like C1-type domain maps to 19–103; that stretch reads STLCLFTDFD…LTEKSFETDM (85 aa). The cysteines at positions 22 and 72 are disulfide-linked. Asparagine 66, asparagine 80, and asparagine 109 each carry an N-linked (GlcNAc...) asparagine glycan. Positions 90-111 are connecting peptide; it reads CDATLTEKSFETDMNLNFQNLS. Residues 111–131 form a helical membrane-spanning segment; the sequence is SVMGLRILLLKVAGFNLLMTL. Topologically, residues 132 to 136 are cytoplasmic; the sequence is RLWSS.

Alpha-beta TR is a heterodimer composed of an alpha and beta chain; disulfide-linked. The alpha-beta TR is associated with the transmembrane signaling CD3 coreceptor proteins to form the TR-CD3 (TcR or TCR). The assembly of alpha-beta TR heterodimers with CD3 occurs in the endoplasmic reticulum where a single alpha-beta TR heterodimer associates with one CD3D-CD3E heterodimer, one CD3G-CD3E heterodimer and one CD247 homodimer forming a stable octameric structure. CD3D-CD3E and CD3G-CD3E heterodimers preferentially associate with TR alpha and TR beta chains, respectively. The association of the CD247 homodimer is the last step of TcR assembly in the endoplasmic reticulum and is required for transport to the cell surface.

The protein resides in the cell membrane. In terms of biological role, constant region of T cell receptor (TR) alpha chain. Alpha-beta T cell receptors are antigen specific receptors which are essential to the immune response and are present on the cell surface of T lymphocytes. Recognize peptide-major histocompatibility (MH) (pMH) complexes that are displayed by antigen presenting cells (APC), a prerequisite for efficient T cell adaptive immunity against pathogens. Binding of alpha-beta TR to pMH complex initiates TR-CD3 clustering on the cell surface and intracellular activation of LCK that phosphorylates the ITAM motifs of CD3G, CD3D, CD3E and CD247 enabling the recruitment of ZAP70. In turn, ZAP70 phosphorylates LAT, which recruits numerous signaling molecules to form the LAT signalosome. The LAT signalosome propagates signal branching to three major signaling pathways, the calcium, the mitogen-activated protein kinase (MAPK) kinase and the nuclear factor NF-kappa-B (NF-kB) pathways, leading to the mobilization of transcription factors that are critical for gene expression and essential for T cell growth and differentiation. The T cell repertoire is generated in the thymus, by V-(D)-J rearrangement. This repertoire is then shaped by intrathymic selection events to generate a peripheral T cell pool of self-MH restricted, non-autoaggressive T cells. Post-thymic interaction of alpha-beta TR with the pMH complexes shapes TR structural and functional avidity. The chain is T-cell receptor alpha chain constant from Mus musculus (Mouse).